The primary structure comprises 541 residues: Molybdate transporter 1 (541 aa).

5 consecutive transmembrane segments (helical) span residues 24 to 44 (LLLS…PLLL), 58 to 78 (LLFS…PLPV), 98 to 118 (TVAA…TGGL), 137 to 157 (AGMS…GWLW), and 168 to 188 (GLGE…GLVV). Positions 193–213 (QQQQQQQSGEKPQERRKKRSK) are disordered. 2 helical membrane passes run 214-234 (MPVQ…FAVV) and 287-307 (MAIA…SALA). The disordered stretch occupies residues 317 to 366 (PQLYADDESSDSPLSPSPSASSSSLSSAPPQTPSAETPKPLSSPTSAEEG). Low complexity predominate over residues 327-351 (DSPLSPSPSASSSSLSSAPPQTPSA). The next 2 helical transmembrane spans lie at 413 to 433 (IILL…PGLL) and 435 to 455 (LLGK…GVEL). Residues 510-541 (TEKGRGGEQGLLGEEEEEEEQGRVDEESPLLR) are disordered.

The protein belongs to the SLC26A/SulP transporter (TC 2.A.53) family.

It localises to the vacuole membrane. Functionally, exports stored molybdate from the vacuole into the cytosol, making it available for molybdate cofactor (Moco) biosynthesis. Plays a role in molybdate homeostasis as high cytosolic levels of molybdate are toxic to cells. Not required for molybdate import into cells. In Neurospora crassa (strain ATCC 24698 / 74-OR23-1A / CBS 708.71 / DSM 1257 / FGSC 987), this protein is Molybdate transporter 1.